The primary structure comprises 352 residues: Nicotinate-nucleotide--dimethylbenzimidazole phosphoribosyltransferase (352 aa).

Catalysis depends on E316, which acts as the Proton acceptor.

This sequence belongs to the CobT family.

The catalysed reaction is 5,6-dimethylbenzimidazole + nicotinate beta-D-ribonucleotide = alpha-ribazole 5'-phosphate + nicotinate + H(+). The protein operates within nucleoside biosynthesis; alpha-ribazole biosynthesis; alpha-ribazole from 5,6-dimethylbenzimidazole: step 1/2. Functionally, catalyzes the synthesis of alpha-ribazole-5'-phosphate from nicotinate mononucleotide (NAMN) and 5,6-dimethylbenzimidazole (DMB). This Yersinia enterocolitica serotype O:8 / biotype 1B (strain NCTC 13174 / 8081) protein is Nicotinate-nucleotide--dimethylbenzimidazole phosphoribosyltransferase.